Here is a 143-residue protein sequence, read N- to C-terminus: MSLTEKDKAAVRALWGKISKSADAIGADALSRMLFVYPQTKTYFTHWPDLSPGSVHVKKHGKNVMGGIALAVSKIDDLTNGLMELSEQHAYQLRVDPANFKILSHCILVVVSIMYPKDFTPEAHVSLDKFLSGVSLALAERYR.

At Ser2 the chain carries N-acetylserine. The Globin domain maps to 2 to 143 (SLTEKDKAAV…VSLALAERYR (142 aa)). Residue His60 coordinates O2. His89 provides a ligand contact to heme b.

Belongs to the globin family. Hb 1 is a heterotetramer of two alpha-1 and two beta chains. In terms of tissue distribution, red blood cells.

In terms of biological role, involved in oxygen transport from gills to the various peripheral tissues. The polypeptide is Hemoglobin subunit alpha-1 (hba1) (Cottoperca gobio (Frogmouth)).